Reading from the N-terminus, the 889-residue chain is MIFFFKKRYHVFLKAPSIRLMPCSFFFFRSFIKVIFIIRCIFFSSLSGDSCPTQRSRSTLACMFTSVPVAPTVVPGVVYSSGVHEEWKEAEQKLLDGCLIHSEGDGATKQIKEKLTSRNSQSVRCDLCAKMIESRDEEQIQEHFQVHHAALSLWCREILASKDNLLHYGCIPSGHIVSCGNFVLESAATLDMGRKTFDVIERAFSQMSQVISCFVRNLVLFPFGSCVSCGCWDGVSDADFTAIGLQDMKKGKWPPEDEKKVILRLTAALRKAGFFFGELEPLVRTRVPVVRRVQKVRVPLRSHGEHDTYSVVWSNSKEFSSPPRMLVEAAISSTVERKDSDTVTFHFKDSLKAVKFFCNSAMCGPRDMEVSWKTGSQLPEMFSLDFDLSCRAQGVRNSLFLRKYFQQDPFVRTGYLFLKKWSKLYGINNAKNGYLTSYAMSILWVHFLLENGLVKFVRPADVEPIPDLSQQKMSYLPLLRDDGDGGERPSDVLKSPELTMLRGALGGLIPLFFLYYTRIRWDKVVVTLRVPGGGPPVTPDSLGWVEANEVKCGPLRDRVWYRLCIDDPYEDNFNLGRHLSPDKASFVKVQFMRALASIVAGRPQQLLVDEQKFAEETMPAYVTRLSVQGELRNLRPVTVSALRQLLIDSAGADCVAIYEASHNWETLLDMASTLNNKSKEGDDDAEGVTNNQEGEPPDHVESCEAPRRHLLCSKMHSIDDALLVAGPLGVSDANIPAGLLGVYFLARGRAFRTAEDRDNFLMHAEAVSAARARGCTTREEILERVADAIPSIVRNGTLLDDLLVSGSEENITVQSPVVVETRCAETVQRKKSKGSKKRKNAVRRGNHAGQGTCSECGASGTDLWEASDKSADDGLYCGACWKAYNCQKN.

The C2H2-type; atypical zinc finger occupies 123–151; it reads VRCDLCAKMIESRDEEQIQEHFQVHHAAL. Zn(2+) contacts are provided by Cys125, Cys128, His143, and His148. UTP-binding positions include Ser225 and 236–239; that span reads SDAD. Residues Asp237 and Asp239 each coordinate Mg(2+). Arg286 contributes to the RNA binding site. UTP is bound by residues 394–398, Lys419, Lys423, and 437–438; these read GVRNS and SY. One can recognise a PAP-associated domain in the interval 505–572; sequence LGGLIPLFFL…LCIDDPYEDN (68 aa). A Nucleotide recognition motif (NRM) motif is present at residues 565–574; it reads IDDPYEDNFN. Disordered stretches follow at residues 675 to 702 and 829 to 849; these read NNKS…HVES and RKKS…NHAG. A compositionally biased stretch (basic residues) spans 829–846; the sequence is RKKSKGSKKRKNAVRRGN.

This sequence belongs to the DNA polymerase type-B-like family. The cofactor is Mg(2+). Mn(2+) serves as cofactor.

It is found in the cytoplasm. The enzyme catalyses RNA(n) + UTP = RNA(n)-3'-uridine ribonucleotide + diphosphate. Its function is as follows. Terminal uridylyltransferase which catalyzes the addition of Us to the 3'-hydroxyl group of single-stranded RNAs. Does not mediate RNA-independent UTP polymerization. The polypeptide is Terminal uridylyltransferase 3 (Trypanosoma brucei brucei).